A 381-amino-acid polypeptide reads, in one-letter code: Mannitol-1-phosphate 5-dehydrogenase (381 aa).

3 to 14 (AVHFGAGNIGRG) is a binding site for NAD(+).

It belongs to the mannitol dehydrogenase family.

The enzyme catalyses D-mannitol 1-phosphate + NAD(+) = beta-D-fructose 6-phosphate + NADH + H(+). The chain is Mannitol-1-phosphate 5-dehydrogenase from Exiguobacterium sibiricum (strain DSM 17290 / CCUG 55495 / CIP 109462 / JCM 13490 / 255-15).